Reading from the N-terminus, the 679-residue chain is Glycine--tRNA ligase beta subunit (679 aa).

It belongs to the class-II aminoacyl-tRNA synthetase family. As to quaternary structure, tetramer of two alpha and two beta subunits.

Its subcellular location is the cytoplasm. The enzyme catalyses tRNA(Gly) + glycine + ATP = glycyl-tRNA(Gly) + AMP + diphosphate. The sequence is that of Glycine--tRNA ligase beta subunit from Streptococcus uberis (strain ATCC BAA-854 / 0140J).